Here is a 155-residue protein sequence, read N- to C-terminus: Interleukin-2 (155 aa).

A signal peptide spans Met1–Gly20. Residue Thr23 is glycosylated (O-linked (GalNAc...) threonine). An intrachain disulfide couples Cys79 to Cys127.

Belongs to the IL-2 family.

The protein localises to the secreted. Its function is as follows. Cytokine produced by activated CD4-positive helper T-cells and to a lesser extend activated CD8-positive T-cells and natural killer (NK) cells that plays pivotal roles in the immune response and tolerance. Binds to a receptor complex composed of either the high-affinity trimeric IL-2R (IL2RA/CD25, IL2RB/CD122 and IL2RG/CD132) or the low-affinity dimeric IL-2R (IL2RB and IL2RG). Interaction with the receptor leads to oligomerization and conformation changes in the IL-2R subunits resulting in downstream signaling starting with phosphorylation of JAK1 and JAK3. In turn, JAK1 and JAK3 phosphorylate the receptor to form a docking site leading to the phosphorylation of several substrates including STAT5. This process leads to activation of several pathways including STAT, phosphoinositide-3-kinase/PI3K and mitogen-activated protein kinase/MAPK pathways. Functions as a T-cell growth factor and can increase NK-cell cytolytic activity as well. Promotes strong proliferation of activated B-cells and subsequently immunoglobulin production. Plays a pivotal role in regulating the adaptive immune system by controlling the survival and proliferation of regulatory T-cells, which are required for the maintenance of immune tolerance. Moreover, participates in the differentiation and homeostasis of effector T-cell subsets, including Th1, Th2, Th17 as well as memory CD8-positive T-cells. This chain is Interleukin-2 (IL2), found in Bubalus bubalis (Domestic water buffalo).